We begin with the raw amino-acid sequence, 431 residues long: STE20-related kinase adapter protein alpha (431 aa).

Residues serine 2 and serine 46 each carry the phosphoserine modification. Disordered stretches follow at residues 32–52 (EQPP…SIAS) and 314–344 (PSRS…SHPY). Positions 69 to 379 (YELLTIIGKG…ASTLLNHSFF (311 aa)) constitute a Protein kinase domain. At threonine 419 the chain carries Phosphothreonine; by LKB1.

Belongs to the protein kinase superfamily. STE Ser/Thr protein kinase family. STE20 subfamily. As to quaternary structure, component of a trimeric complex composed of STK11/LKB1, STRAD (STRADA or STRADB) and CAB39/MO25 (CAB39/MO25alpha or CAB39L/MO25beta): the complex tethers STK11/LKB1 in the cytoplasm and stimulates its catalytic activity.

Its subcellular location is the nucleus. It is found in the cytoplasm. Its function is as follows. Pseudokinase which, in complex with CAB39/MO25 (CAB39/MO25alpha or CAB39L/MO25beta), binds to and activates STK11/LKB1. Adopts a closed conformation typical of active protein kinases and binds STK11/LKB1 as a pseudosubstrate, promoting conformational change of STK11/LKB1 in an active conformation. The polypeptide is STE20-related kinase adapter protein alpha (Strada) (Mus musculus (Mouse)).